A 653-amino-acid polypeptide reads, in one-letter code: 4-alpha-glucanotransferase (653 aa).

Residue glutamate 123 is the Nucleophile of the active site. Residue aspartate 214 is the Proton donor of the active site.

This sequence belongs to the glycosyl hydrolase 57 family.

It carries out the reaction Transfers a segment of a (1-&gt;4)-alpha-D-glucan to a new position in an acceptor, which may be glucose or a (1-&gt;4)-alpha-D-glucan.. The polypeptide is 4-alpha-glucanotransferase (Thermococcus kodakarensis (strain ATCC BAA-918 / JCM 12380 / KOD1) (Pyrococcus kodakaraensis (strain KOD1))).